Reading from the N-terminus, the 303-residue chain is MNPQELKSILSHGLLSFPVTDFNAQGDFNPAGYIKRLEWLAPYGASALFAAGGTGEFFSLAASEYSQVIKTAVDTCATSVPILAGVGGSTRQAIEYAQEAERLGAKGLLLLPHYLTEASQDGVAAHVEAVCKSVNIGVVVYNRNVCRLNADLLEKLAERCPNLIGYKDGLGDIELMVSIRRRLGERFSYLGGLPTAEVYAAAYKALGVPVYSSAVFNFVPKTAMDFYNAIARDDHAAVAKLIDDFFLPYLDIRNRKAGYAVSIVKAGARIAGYDAGPVRTPLTDLTAEEYEMLAALMDKMGPQ.

It belongs to the DapA family.

It catalyses the reaction 5-dehydro-4-deoxy-D-glucarate + H(+) = 2,5-dioxopentanoate + CO2 + H2O. It participates in carbohydrate acid metabolism; D-glucarate degradation; 2,5-dioxopentanoate from D-glucarate: step 2/2. This is Probable 5-dehydro-4-deoxyglucarate dehydratase from Pseudomonas putida (strain ATCC 700007 / DSM 6899 / JCM 31910 / BCRC 17059 / LMG 24140 / F1).